Consider the following 72-residue polypeptide: Translation initiation factor IF-1 (72 aa).

One can recognise an S1-like domain in the interval 1 to 72; it reads MAKDDVIEIE…TKGRITYRFK (72 aa).

This sequence belongs to the IF-1 family. In terms of assembly, component of the 30S ribosomal translation pre-initiation complex which assembles on the 30S ribosome in the order IF-2 and IF-3, IF-1 and N-formylmethionyl-tRNA(fMet); mRNA recruitment can occur at any time during PIC assembly.

It is found in the cytoplasm. Its function is as follows. One of the essential components for the initiation of protein synthesis. Stabilizes the binding of IF-2 and IF-3 on the 30S subunit to which N-formylmethionyl-tRNA(fMet) subsequently binds. Helps modulate mRNA selection, yielding the 30S pre-initiation complex (PIC). Upon addition of the 50S ribosomal subunit IF-1, IF-2 and IF-3 are released leaving the mature 70S translation initiation complex. The sequence is that of Translation initiation factor IF-1 from Ligilactobacillus salivarius (strain UCC118) (Lactobacillus salivarius).